The chain runs to 434 residues: Trigger factor (434 aa).

Positions 161–246 (EDRVTIDFTG…LKKVEERELP (86 aa)) constitute a PPIase FKBP-type domain.

The protein belongs to the FKBP-type PPIase family. Tig subfamily.

The protein resides in the cytoplasm. It carries out the reaction [protein]-peptidylproline (omega=180) = [protein]-peptidylproline (omega=0). Its function is as follows. Involved in protein export. Acts as a chaperone by maintaining the newly synthesized protein in an open conformation. Functions as a peptidyl-prolyl cis-trans isomerase. This Pectobacterium carotovorum subsp. carotovorum (strain PC1) protein is Trigger factor.